Consider the following 232-residue polypeptide: Uracil-DNA glycosylase (232 aa).

Asp-70 serves as the catalytic Proton acceptor.

This sequence belongs to the uracil-DNA glycosylase (UDG) superfamily. UNG family.

It is found in the cytoplasm. The enzyme catalyses Hydrolyzes single-stranded DNA or mismatched double-stranded DNA and polynucleotides, releasing free uracil.. Excises uracil residues from the DNA which can arise as a result of misincorporation of dUMP residues by DNA polymerase or due to deamination of cytosine. This Campylobacter fetus subsp. fetus (strain 82-40) protein is Uracil-DNA glycosylase.